Reading from the N-terminus, the 856-residue chain is Dual specificity protein kinase TTK (856 aa).

Methionine 1 is subject to N-acetylmethionine. Phosphothreonine is present on threonine 32. 3 positions are modified to phosphoserine: serine 36, serine 277, and serine 342. Position 380 is a phosphothreonine (threonine 380). A phosphoserine mark is found at serine 383, serine 435, and serine 454. In terms of domain architecture, Protein kinase spans 524-790; that stretch reads YSILKQIGSG…IPELLTHPYV (267 aa). ATP-binding positions include 530 to 538 and lysine 552; that span reads IGSGGSSKV. Aspartate 646 (proton acceptor) is an active-site residue. Position 820 is a phosphoserine (serine 820). Positions 837–856 are disordered; sequence CGEGQDSSSSKTFDKKRERK.

The protein belongs to the protein kinase superfamily. Ser/Thr protein kinase family. Interacts with TPR; the interactions occurs in a microtubule-independent manner. Interacts with MAD1L1 and MAD2L1. Post-translationally, autophosphorylated. In terms of tissue distribution, present in rapidly proliferating cell lines; high levels in testis, bone marrow, spleen and thymus. Low levels in brain, heart, lung and kidney.

It carries out the reaction L-seryl-[protein] + ATP = O-phospho-L-seryl-[protein] + ADP + H(+). The catalysed reaction is L-threonyl-[protein] + ATP = O-phospho-L-threonyl-[protein] + ADP + H(+). It catalyses the reaction L-tyrosyl-[protein] + ATP = O-phospho-L-tyrosyl-[protein] + ADP + H(+). Inhibited by the ATP-competitive kinase inhibitor, SP600125. In terms of biological role, involved in mitotic spindle assembly checkpoint signaling, a process that delays anaphase until chromosomes are bioriented on the spindle, and in the repair of incorrect mitotic kinetochore-spindle microtubule attachments. Phosphorylates MAD1L1 to promote the mitotic spindle assembly checkpoint. Phosphorylates CDCA8/Borealin leading to enhanced AURKB activity at the kinetochore. Phosphorylates SKA3 at 'Ser-34' leading to dissociation of the SKA complex from microtubules and destabilization of microtubule-kinetochore attachments. Phosphorylates KNL1, KNTC1 and autophosphorylates. Phosphorylates MCRS1 which enhances recruitment of KIF2A to the minus end of spindle microtubules and promotes chromosome alignment. The sequence is that of Dual specificity protein kinase TTK (Ttk) from Mus musculus (Mouse).